A 547-amino-acid chain; its full sequence is Probable bifunctional tRNA threonylcarbamoyladenosine biosynthesis protein (547 aa).

Residues 1 to 329 are kae1; sequence MGNSNELICI…FRTDMVDVNW (329 aa). Fe cation-binding residues include His-112, His-116, and Tyr-133. L-threonylcarbamoyladenylate is bound by residues 133–137, Asp-165, Gly-178, Glu-182, and Asn-262; that span reads YVSGG. Asp-290 contacts Fe cation. Positions 346–547 constitute a Protein kinase domain; the sequence is QIPRHLIGKG…KEVEKRGRYL (202 aa). ATP contacts are provided by residues 352 to 360 and Lys-373; that span reads IGKGAEADI. Catalysis depends on Asp-465, which acts as the Proton acceptor; for kinase activity.

This sequence in the N-terminal section; belongs to the KAE1 / TsaD family. The protein in the C-terminal section; belongs to the protein kinase superfamily. Tyr protein kinase family. BUD32 subfamily. In terms of assembly, component of the KEOPS complex that consists of Kae1, Bud32, Cgi121 and Pcc1; the whole complex dimerizes. Requires Fe(2+) as cofactor.

The protein resides in the cytoplasm. The catalysed reaction is L-seryl-[protein] + ATP = O-phospho-L-seryl-[protein] + ADP + H(+). It catalyses the reaction L-threonyl-[protein] + ATP = O-phospho-L-threonyl-[protein] + ADP + H(+). It carries out the reaction L-threonylcarbamoyladenylate + adenosine(37) in tRNA = N(6)-L-threonylcarbamoyladenosine(37) in tRNA + AMP + H(+). Its function is as follows. Required for the formation of a threonylcarbamoyl group on adenosine at position 37 (t(6)A37) in tRNAs that read codons beginning with adenine. Is a component of the KEOPS complex that is probably involved in the transfer of the threonylcarbamoyl moiety of threonylcarbamoyl-AMP (TC-AMP) to the N6 group of A37. The Kae1 domain likely plays a direct catalytic role in this reaction. The Bud32 domain probably displays kinase activity that regulates Kae1 function. The sequence is that of Probable bifunctional tRNA threonylcarbamoyladenosine biosynthesis protein from Methanococcus vannielii (strain ATCC 35089 / DSM 1224 / JCM 13029 / OCM 148 / SB).